The chain runs to 494 residues: UPF0371 protein SUB1165 (494 aa).

It belongs to the UPF0371 family.

The protein is UPF0371 protein SUB1165 of Streptococcus uberis (strain ATCC BAA-854 / 0140J).